We begin with the raw amino-acid sequence, 261 residues long: Cytochrome c oxidase subunit 3 (261 aa).

The Mitochondrial matrix portion of the chain corresponds to 1-15 (MAHQAHAYHMVDPSP). Residues 16-34 (WPLTGAIAALLMTSGLAIW) form a helical membrane-spanning segment. At 35 to 40 (FHFHST) the chain is on the mitochondrial intermembrane side. Residues 41–66 (TLMTLGLILLLLTMYQWWRDIIREGT) traverse the membrane as a helical segment. Over 67–72 (FQGHHT) the chain is Mitochondrial matrix. A helical transmembrane segment spans residues 73-105 (PPVQKGLRYGMILFITSEVFFFLGFFWAFYHSS). Residues 106 to 128 (LAPTPELGGCWPPTGITPLDPFE) are Mitochondrial intermembrane-facing. A helical membrane pass occupies residues 129-152 (VPLLNTAVLLASGVTVTWAHHSIM). Topologically, residues 153-155 (EGE) are mitochondrial matrix. Residues 156 to 183 (RKQAIQSLALTILLGLYFTALQAMEYYE) form a helical membrane-spanning segment. Topologically, residues 184–190 (APFTIAD) are mitochondrial intermembrane. The chain crosses the membrane as a helical span at residues 191-223 (GVYGSTFFVATGFHGLHVIIGSTFLAVCLLRQI). The Mitochondrial matrix segment spans residues 224–232 (QYHFTSEHH). The chain crosses the membrane as a helical span at residues 233 to 256 (FGFEAAAWYWHFVDVVWLFLYVSI). The Mitochondrial intermembrane portion of the chain corresponds to 257–261 (YWWGS).

It belongs to the cytochrome c oxidase subunit 3 family. In terms of assembly, component of the cytochrome c oxidase (complex IV, CIV), a multisubunit enzyme composed of 14 subunits. The complex is composed of a catalytic core of 3 subunits MT-CO1, MT-CO2 and MT-CO3, encoded in the mitochondrial DNA, and 11 supernumerary subunits COX4I, COX5A, COX5B, COX6A, COX6B, COX6C, COX7A, COX7B, COX7C, COX8 and NDUFA4, which are encoded in the nuclear genome. The complex exists as a monomer or a dimer and forms supercomplexes (SCs) in the inner mitochondrial membrane with NADH-ubiquinone oxidoreductase (complex I, CI) and ubiquinol-cytochrome c oxidoreductase (cytochrome b-c1 complex, complex III, CIII), resulting in different assemblies (supercomplex SCI(1)III(2)IV(1) and megacomplex MCI(2)III(2)IV(2)).

The protein localises to the mitochondrion inner membrane. The enzyme catalyses 4 Fe(II)-[cytochrome c] + O2 + 8 H(+)(in) = 4 Fe(III)-[cytochrome c] + 2 H2O + 4 H(+)(out). Component of the cytochrome c oxidase, the last enzyme in the mitochondrial electron transport chain which drives oxidative phosphorylation. The respiratory chain contains 3 multisubunit complexes succinate dehydrogenase (complex II, CII), ubiquinol-cytochrome c oxidoreductase (cytochrome b-c1 complex, complex III, CIII) and cytochrome c oxidase (complex IV, CIV), that cooperate to transfer electrons derived from NADH and succinate to molecular oxygen, creating an electrochemical gradient over the inner membrane that drives transmembrane transport and the ATP synthase. Cytochrome c oxidase is the component of the respiratory chain that catalyzes the reduction of oxygen to water. Electrons originating from reduced cytochrome c in the intermembrane space (IMS) are transferred via the dinuclear copper A center (CU(A)) of subunit 2 and heme A of subunit 1 to the active site in subunit 1, a binuclear center (BNC) formed by heme A3 and copper B (CU(B)). The BNC reduces molecular oxygen to 2 water molecules using 4 electrons from cytochrome c in the IMS and 4 protons from the mitochondrial matrix. This Cyprinus carpio (Common carp) protein is Cytochrome c oxidase subunit 3 (mt-co3).